The following is a 437-amino-acid chain: MEKWGILLLVTLSVSIIFTSAAADDYVRPKPRETLQFPWKQKSSSVPEQVHISLAGDKHMRVTWVTNDKSSPSFVEYGTSPGKYSYLGQGESTSYSYIMYRSGKIHHTVIGPLEADTVYYYRCGGEGPEFHLKTPPAQFPITFAVAGDLGQTGWTKSTLDHIDQCKYAVHLLPGDLSYADYMQHKWDTFGELVQPLASVRPWMVTQGNHEKESIPFIVDEFVSFNSRWKMPYEESGSNSNLYYSFEVAGVHAIMLGSYTDYDRYSDQYSWLKADLSKVDRERTPWLIVLFHVPWYNSNNAHQHEGDEMMAEMEPLLYASGVDIVFTGHVHAYERTKRVNNGKSDPCGPVHITIGDGGNREGLARKYKDPSPEWSVFREASFGHGELQMVNSTHALWTWHRNDDDEPTRSDEVWLNSLVNSGCLKKRPQELRKMLLEP.

Residues 1-23 form the signal peptide; it reads MEKWGILLLVTLSVSIIFTSAAA. Positions 148, 175, and 178 each coordinate Fe cation. Aspartate 175 contacts Zn(2+). Residues asparagine 208 and histidine 291 each contribute to the Zn(2+) site. A substrate-binding site is contributed by asparagine 208. Histidine 301 functions as the Proton donor in the catalytic mechanism. A Zn(2+)-binding site is contributed by histidine 328. 328–330 contributes to the substrate binding site; sequence HVH. Position 330 (histidine 330) interacts with Fe cation. N-linked (GlcNAc...) asparagine glycosylation is present at asparagine 390.

It belongs to the metallophosphoesterase superfamily. Purple acid phosphatase family. Homodimer. Fe cation serves as cofactor. The cofactor is Zn(2+). As to expression, expressed in roots, stems, leaves, flowers and siliques.

It localises to the secreted. The enzyme catalyses a phosphate monoester + H2O = an alcohol + phosphate. This is Purple acid phosphatase 18 (PAP18) from Arabidopsis thaliana (Mouse-ear cress).